The primary structure comprises 339 residues: Glycerol-3-phosphate dehydrogenase [NAD(P)+] (339 aa).

Residues Ser-15, Tyr-16, His-36, and Lys-110 each coordinate NADPH. Sn-glycerol 3-phosphate contacts are provided by Lys-110, Gly-139, and Thr-141. Ala-143 is an NADPH binding site. 5 residues coordinate sn-glycerol 3-phosphate: Lys-195, Asp-248, Ser-258, Arg-259, and Asn-260. Lys-195 (proton acceptor) is an active-site residue. Arg-259 provides a ligand contact to NADPH. NADPH contacts are provided by Val-283 and Glu-285.

It belongs to the NAD-dependent glycerol-3-phosphate dehydrogenase family.

Its subcellular location is the cytoplasm. It carries out the reaction sn-glycerol 3-phosphate + NAD(+) = dihydroxyacetone phosphate + NADH + H(+). The enzyme catalyses sn-glycerol 3-phosphate + NADP(+) = dihydroxyacetone phosphate + NADPH + H(+). Its pathway is membrane lipid metabolism; glycerophospholipid metabolism. Its function is as follows. Catalyzes the reduction of the glycolytic intermediate dihydroxyacetone phosphate (DHAP) to sn-glycerol 3-phosphate (G3P), the key precursor for phospholipid synthesis. The protein is Glycerol-3-phosphate dehydrogenase [NAD(P)+] of Escherichia fergusonii (strain ATCC 35469 / DSM 13698 / CCUG 18766 / IAM 14443 / JCM 21226 / LMG 7866 / NBRC 102419 / NCTC 12128 / CDC 0568-73).